We begin with the raw amino-acid sequence, 90 residues long: Small ribosomal subunit protein bS20 (90 aa).

This sequence belongs to the bacterial ribosomal protein bS20 family.

Its function is as follows. Binds directly to 16S ribosomal RNA. The polypeptide is Small ribosomal subunit protein bS20 (Acidiphilium cryptum (strain JF-5)).